The sequence spans 649 residues: MADPAGTNGEEGTGCNGWFYVEAVVEKKTGDAISDDENENDSDTGEDLVDFIVNDNDYLTQAETETAHALFTAQEAKQHRDAVQVLKRKYLVSPLSDISGCVDNNISPRLKAICIEKQSRAAKRRLFESEDSGYGNTEVETQQMLQVEGRHETETPCSQYSGGSGGGCSQYSSGSGGEGVSERHTICQTPLTNILNVLKTSNAKAAMLAKFKELYGVSFSELVRPFKSNKSTCCDWCIAAFGLTPSIADSIKTLLQQYCLYLHIQSLACSWGMVVLLLVRYKCGKNRETIEKLLSKLLCVSPMCMMIEPPKLRSTAAALYWYKTGISNISEVYGDTPEWIQRQTVLQHSFNDCTFELSQMVQWAYDNDIVDDSEIAYKYAQLADTNSNASAFLKSNSQAKIVKDCATMCRHYKRAEKKQMSMSQWIKYRCDRVDDGGDWKQIVMFLRYQGVEFMSFLTALKRFLQGIPKKNCILLYGAANTGKSLFGMSLMKFLQGSVICFVNSKSHFWLQPLADAKIGMLDDATVPCWNYIDDNLRNALDGNLVSMDVKHRPLVQLKCPPLLITSNINAGTDSRWPYLHNRLVVFTFPNEFPFDENGNPVYELNDKNWKSFFSRTWSRLSLHEDEDKENDGDSLPTFKCVSGQNTNTL.

Positions 87 to 89 (KRK) match the Nuclear localization signal motif. Residues S93 and S107 each carry the phosphoserine; by host modification. Positions 106–115 (ISPRLKAICI) match the Nuclear export signal motif. Residues 186-352 (ICQTPLTNIL…QTVLQHSFND (167 aa)) are DNA-binding region. An SF3 helicase domain is found at 451–601 (VEFMSFLTAL…FPFDENGNPV (151 aa)). An ATP-binding site is contributed by 477 to 484 (GAANTGKS). A Glycyl lysine isopeptide (Lys-Gly) (interchain with G-Cter in SUMO) cross-link involves residue K558. A disordered region spans residues 624–649 (EDEDKENDGDSLPTFKCVSGQNTNTL).

It belongs to the papillomaviridae E1 protein family. As to quaternary structure, can form hexamers. Interacts with E2 protein; this interaction increases E1 DNA binding specificity. Interacts with host DNA polymerase subunit POLA2. Interacts with host single stranded DNA-binding protein RPA1. Interacts with host TOP1; this interaction stimulates the enzymatic activity of TOP1. In terms of processing, phosphorylated. Sumoylated.

It localises to the host nucleus. It carries out the reaction Couples ATP hydrolysis with the unwinding of duplex DNA by translocating in the 3'-5' direction.. It catalyses the reaction ATP + H2O = ADP + phosphate + H(+). In terms of biological role, ATP-dependent DNA 3'-5' helicase required for initiation of viral DNA replication. It forms a complex with the viral E2 protein. The E1-E2 complex binds to the replication origin which contains binding sites for both proteins. During the initial step, a dimer of E1 interacts with a dimer of protein E2 leading to a complex that binds the viral origin of replication with high specificity. Then, a second dimer of E1 displaces the E2 dimer in an ATP-dependent manner to form the E1 tetramer. Following this, two E1 monomers are added to each half of the site, which results in the formation of two E1 trimers on the viral ori. Subsequently, two hexamers will be created. The double hexamer acts as a bi-directional helicase machinery and unwinds the viral DNA and then recruits the host DNA polymerase to start replication. The polypeptide is Replication protein E1 (Human papillomavirus type 16).